Reading from the N-terminus, the 259-residue chain is Succinate dehydrogenase iron-sulfur subunit (259 aa).

A 2Fe-2S ferredoxin-type domain is found at arginine 28–methionine 119. Cysteine 80, cysteine 85, and cysteine 100 together coordinate [2Fe-2S] cluster. The 31-residue stretch at aspartate 160 to tyrosine 190 folds into the 4Fe-4S ferredoxin-type domain. 3 residues coordinate [4Fe-4S] cluster: cysteine 170, cysteine 173, and cysteine 176. Cysteine 180 contacts [3Fe-4S] cluster. Residue tryptophan 185 participates in a ubiquinone binding. [3Fe-4S] cluster contacts are provided by cysteine 227 and cysteine 233. Cysteine 237 contacts [4Fe-4S] cluster.

It belongs to the succinate dehydrogenase/fumarate reductase iron-sulfur protein family. In terms of assembly, part of an enzyme complex containing four subunits: a flavoprotein, an iron-sulfur, cytochrome b-556, and a hydrophobic anchor protein. It depends on [2Fe-2S] cluster as a cofactor. [3Fe-4S] cluster serves as cofactor. [4Fe-4S] cluster is required as a cofactor.

It carries out the reaction a quinone + succinate = fumarate + a quinol. It participates in carbohydrate metabolism; tricarboxylic acid cycle; fumarate from succinate (bacterial route): step 1/1. This chain is Succinate dehydrogenase iron-sulfur subunit (sdhB), found in Paracoccus denitrificans.